Reading from the N-terminus, the 234-residue chain is MLIVLSVGGSILAKNLDPKHFSAYASALKELARKHQIVVVTGGGVAARNYIDVARGVGANEVVCDFIGIDITRLNAQLLIAALGNTAHPEPPTTYKEAESALASGKIVVMGGVIPGQTTDAVAAILAEYLNADMMVIATSVDGVYSSDPREDPNAKKFDVMTAKELVGIVISTEMKAGSKSPVDPLASKIIERCNIDTIIMDGTDPQDVLEVVLQEAVKTDKVTGVRLGTRIIG.

Position 9-10 (9-10) interacts with ATP; that stretch reads GS. Residue glycine 43 coordinates UMP. Positions 44 and 48 each coordinate ATP. UMP-binding positions include aspartate 65 and 113–119; that span reads VIPGQTT. The ATP site is built by threonine 139, tyrosine 145, and aspartate 148.

It belongs to the UMP kinase family. Homohexamer.

It localises to the cytoplasm. It catalyses the reaction UMP + ATP = UDP + ADP. The protein operates within pyrimidine metabolism; CTP biosynthesis via de novo pathway; UDP from UMP (UMPK route): step 1/1. Its activity is regulated as follows. Inhibited by UTP. Functionally, catalyzes the reversible phosphorylation of UMP to UDP. The protein is Uridylate kinase of Methanococcoides burtonii (strain DSM 6242 / NBRC 107633 / OCM 468 / ACE-M).